The sequence spans 645 residues: Acetyl-coenzyme A synthetase (645 aa).

Residues 190 to 193 and Thr309 contribute to the CoA site; that span reads RGGR. ATP contacts are provided by residues 385-387, 409-414, Asp498, and Arg513; these read GEP and DTWWQT. CoA is bound at residue Ser521. Arg524 is a binding site for ATP. Mg(2+) contacts are provided by Val535, His537, and Val540. Arg582 is a CoA binding site. Position 607 is an N6-acetyllysine (Lys607).

It belongs to the ATP-dependent AMP-binding enzyme family. It depends on Mg(2+) as a cofactor. Post-translationally, acetylated. Deacetylation by the SIR2-homolog deacetylase activates the enzyme.

It catalyses the reaction acetate + ATP + CoA = acetyl-CoA + AMP + diphosphate. Functionally, catalyzes the conversion of acetate into acetyl-CoA (AcCoA), an essential intermediate at the junction of anabolic and catabolic pathways. AcsA undergoes a two-step reaction. In the first half reaction, AcsA combines acetate with ATP to form acetyl-adenylate (AcAMP) intermediate. In the second half reaction, it can then transfer the acetyl group from AcAMP to the sulfhydryl group of CoA, forming the product AcCoA. In Methylocella silvestris (strain DSM 15510 / CIP 108128 / LMG 27833 / NCIMB 13906 / BL2), this protein is Acetyl-coenzyme A synthetase.